The sequence spans 291 residues: Nucleotide-binding protein jk1004 (291 aa).

16-23 (GMSGAGRR) contacts ATP. 67–70 (DVRS) is a GTP binding site.

This sequence belongs to the RapZ-like family.

Its function is as follows. Displays ATPase and GTPase activities. The polypeptide is Nucleotide-binding protein jk1004 (Corynebacterium jeikeium (strain K411)).